An 81-amino-acid chain; its full sequence is MERIYVIPLRKAKNVPRTIRAPKAVKIVREFLMKHMKADTVKLDESINEKLWERGIQKIPPRIKVKAVKDEDGVVEATLEE.

Belongs to the eukaryotic ribosomal protein eL31 family.

The chain is Large ribosomal subunit protein eL31 (rpl31e) from Methanothermobacter thermautotrophicus (strain ATCC 29096 / DSM 1053 / JCM 10044 / NBRC 100330 / Delta H) (Methanobacterium thermoautotrophicum).